Here is a 289-residue protein sequence, read N- to C-terminus: tRNA dimethylallyltransferase (289 aa).

Residue 9–16 (GTTASGKT) coordinates ATP. Residue 11–16 (TASGKT) coordinates substrate. An interaction with substrate tRNA region spans residues 34-37 (DSLC).

The protein belongs to the IPP transferase family. Monomer. Requires Mg(2+) as cofactor.

The enzyme catalyses adenosine(37) in tRNA + dimethylallyl diphosphate = N(6)-dimethylallyladenosine(37) in tRNA + diphosphate. Functionally, catalyzes the transfer of a dimethylallyl group onto the adenine at position 37 in tRNAs that read codons beginning with uridine, leading to the formation of N6-(dimethylallyl)adenosine (i(6)A). The polypeptide is tRNA dimethylallyltransferase (Campylobacter jejuni subsp. jejuni serotype O:23/36 (strain 81-176)).